Consider the following 330-residue polypeptide: Exostosin-like 2 (330 aa).

Residues 1 to 21 (MMRGCHICKLPGRVMGIRVLR) are Cytoplasmic-facing. A helical; Signal-anchor for type II membrane protein transmembrane segment spans residues 22-42 (FSLVVILVLLLVAGALTNLLP). At 43–330 (NIKEDKMLTL…FPYANHKSKM (288 aa)) the chain is on the lumenal side. Residue glutamine 72 coordinates UDP-N-acetyl-alpha-D-galactosamine. Glutamine 72 lines the UDP-N-acetyl-alpha-D-glucosamine pocket. An N-linked (GlcNAc...) asparagine glycan is attached at asparagine 75. 8 residues coordinate UDP-N-acetyl-alpha-D-galactosamine: arginine 76, asparagine 101, asparagine 130, arginine 135, aspartate 151, aspartate 152, aspartate 153, and aspartate 245. Positions 76, 101, 130, 135, 151, 152, 153, 245, 246, and 293 each coordinate UDP-N-acetyl-alpha-D-glucosamine. Aspartate 153 provides a ligand contact to Mn(2+). Cysteine 244 and cysteine 296 form a disulfide bridge. Residue aspartate 246 is part of the active site. Residue arginine 293 participates in UDP-N-acetyl-alpha-D-galactosamine binding.

The protein belongs to the glycosyltransferase 47 family. Mn(2+) serves as cofactor.

It is found in the endoplasmic reticulum membrane. The enzyme catalyses 3-O-(beta-D-GlcA-(1-&gt;3)-beta-D-Gal-(1-&gt;3)-beta-D-Gal-(1-&gt;4)-beta-D-Xyl)-L-seryl-[protein] + UDP-N-acetyl-alpha-D-glucosamine = 3-O-(alpha-D-GlcNAc-(1-&gt;4)-beta-D-GlcA-(1-&gt;3)-beta-D-Gal-(1-&gt;3)-beta-D-Gal-(1-&gt;4)-beta-D-Xyl)-L-seryl-[protein] + UDP + H(+). Functionally, glycosyltransferase required for the biosynthesis of heparan-sulfate and responsible for the alternating addition of beta-1-4-linked glucuronic acid (GlcA) and alpha-1-4-linked N-acetylglucosamine (GlcNAc) units to nascent heparan sulfate chains. In Mus musculus (Mouse), this protein is Exostosin-like 2 (Extl2).